The chain runs to 341 residues: Methionine import ATP-binding protein MetN 3 (341 aa).

The ABC transporter domain occupies 2–241 (ILLENVKKIY…PQQDITKRFV (240 aa)). 38–45 (GYSGAGKS) contacts ATP.

Belongs to the ABC transporter superfamily. Methionine importer (TC 3.A.1.24) family. As to quaternary structure, the complex is composed of two ATP-binding proteins (MetN), two transmembrane proteins (MetI) and a solute-binding protein (MetQ).

The protein resides in the cell membrane. The catalysed reaction is L-methionine(out) + ATP + H2O = L-methionine(in) + ADP + phosphate + H(+). It carries out the reaction D-methionine(out) + ATP + H2O = D-methionine(in) + ADP + phosphate + H(+). Functionally, part of the ABC transporter complex MetNIQ involved in methionine import. Responsible for energy coupling to the transport system. The polypeptide is Methionine import ATP-binding protein MetN 3 (Bacillus cereus (strain ATCC 10987 / NRS 248)).